Consider the following 179-residue polypeptide: Large ribosomal subunit protein uL5 (179 aa).

Belongs to the universal ribosomal protein uL5 family. In terms of assembly, part of the 50S ribosomal subunit; part of the 5S rRNA/L5/L18/L25 subcomplex. Contacts the 5S rRNA and the P site tRNA. Forms a bridge to the 30S subunit in the 70S ribosome.

Functionally, this is one of the proteins that bind and probably mediate the attachment of the 5S RNA into the large ribosomal subunit, where it forms part of the central protuberance. In the 70S ribosome it contacts protein S13 of the 30S subunit (bridge B1b), connecting the 2 subunits; this bridge is implicated in subunit movement. Contacts the P site tRNA; the 5S rRNA and some of its associated proteins might help stabilize positioning of ribosome-bound tRNAs. The chain is Large ribosomal subunit protein uL5 from Staphylococcus haemolyticus (strain JCSC1435).